We begin with the raw amino-acid sequence, 89 residues long: Small ribosomal subunit protein uS15 (89 aa).

Belongs to the universal ribosomal protein uS15 family. In terms of assembly, part of the 30S ribosomal subunit. Forms a bridge to the 50S subunit in the 70S ribosome, contacting the 23S rRNA.

One of the primary rRNA binding proteins, it binds directly to 16S rRNA where it helps nucleate assembly of the platform of the 30S subunit by binding and bridging several RNA helices of the 16S rRNA. In terms of biological role, forms an intersubunit bridge (bridge B4) with the 23S rRNA of the 50S subunit in the ribosome. This chain is Small ribosomal subunit protein uS15, found in Sodalis glossinidius (strain morsitans).